The primary structure comprises 41 residues: Large ribosomal subunit protein bL36 (41 aa).

The protein belongs to the bacterial ribosomal protein bL36 family.

This Beijerinckia indica subsp. indica (strain ATCC 9039 / DSM 1715 / NCIMB 8712) protein is Large ribosomal subunit protein bL36.